A 572-amino-acid chain; its full sequence is Methionine--tRNA ligase (572 aa).

The short motif at 11–21 (PYINGIKHLGN) is the 'HIGH' region element. Zn(2+)-binding residues include cysteine 143, cysteine 146, cysteine 156, and cysteine 159. The short motif at 346–350 (QFSTS) is the 'KMSKS' region element. Threonine 349 contributes to the ATP binding site.

This sequence belongs to the class-I aminoacyl-tRNA synthetase family. MetG type 1 subfamily. In terms of assembly, monomer. The cofactor is Zn(2+).

Its subcellular location is the cytoplasm. The enzyme catalyses tRNA(Met) + L-methionine + ATP = L-methionyl-tRNA(Met) + AMP + diphosphate. Its function is as follows. Is required not only for elongation of protein synthesis but also for the initiation of all mRNA translation through initiator tRNA(fMet) aminoacylation. In Paracoccus denitrificans (strain Pd 1222), this protein is Methionine--tRNA ligase.